We begin with the raw amino-acid sequence, 301 residues long: MTTLDDKLLGEKLQYYYSTSEDEDSDHEDKDRGRGAPAISSTPAEAELAGEGISINTGPKGVINDWRRFKQLETEQREEQCREMERLIKKLSMSCRSHLDEEEEQQKQKDLQEKISGKMTLKEFGTKDKNLDDEEFLQQYRKQRMEEMRQQFHKGPQFKQVFEIPSGEGFLDMIDKEQKSTLIMVHIYEDGVPGTEAMNGCMICLATEYPAVKFCRVRSSVIGASSRFTRNALPALLIYKAGELIGNFVRVTDQLGEDFFAVDLEAFLQEFGLLPEKEVLVLTSVRNSATCHSEDSDLEID.

N-acetylthreonine is present on T2. The segment at 17–60 is disordered; it reads YSTSEDEDSDHEDKDRGRGAPAISSTPAEAELAGEGISINTGPK. Phosphoserine occurs at positions 20, 25, 226, 293, and 296. Residues 36-299 form the Phosducin domain; it reads APAISSTPAE…TCHSEDSDLE (264 aa). The tract at residues 158 to 301 is thioredoxin fold; sequence FKQVFEIPSG…HSEDSDLEID (144 aa).

The protein belongs to the phosducin family. As to quaternary structure, forms a complex with the beta and gamma subunits of the GTP-binding protein, transducin. Interacts with the CCT chaperonin complex.

It localises to the cell projection. The protein resides in the cilium. Its function is as follows. Functions as a co-chaperone for CCT in the assembly of heterotrimeric G protein complexes, facilitates the assembly of both Gbeta-Ggamma and RGS-Gbeta5 heterodimers. Also acts as a positive regulator of hedgehog signaling and regulates ciliary function. The polypeptide is Phosducin-like protein (Pdcl) (Mus musculus (Mouse)).